A 1149-amino-acid polypeptide reads, in one-letter code: Potassium channel subfamily U member 1 (1149 aa).

At methionine 1–glutamine 24 the chain is on the extracellular side. Residues alanine 25 to phenylalanine 45 form a helical membrane-spanning segment. Residues arginine 46–valine 101 are Cytoplasmic-facing. Residues glycine 102 to isoleucine 122 form a helical membrane-spanning segment. Residues asparagine 123 to threonine 138 lie on the Extracellular side of the membrane. Residues isoleucine 139–alanine 159 traverse the membrane as a helical segment. At alanine 160–lysine 163 the chain is on the cytoplasmic side. Residues isoleucine 164–isoleucine 184 traverse the membrane as a helical segment. Topologically, residues serine 185–leucine 188 are extracellular. Residues lysine 189–isoleucine 209 form a helical; Voltage-sensor membrane-spanning segment. At leucine 210–lysine 226 the chain is on the cytoplasmic side. Residues leucine 227–asparagine 247 form a helical membrane-spanning segment. The Extracellular portion of the chain corresponds to serine 248–glutamine 259. An intramembrane region (pore-forming) is located at residues asparagine 260–valine 282. Positions threonine 276–phenylalanine 279 match the Selectivity for potassium motif. Residues valine 283 to threonine 291 lie on the Extracellular side of the membrane. A helical membrane pass occupies residues phenylalanine 292–valine 312. At glutamate 313–leucine 1149 the chain is on the cytoplasmic side. 2 RCK N-terminal domains span residues lysine 331–isoleucine 473 and arginine 713–leucine 884. 2 disordered regions span residues glutamine 828–serine 854 and serine 1118–leucine 1149. Residues aspartate 830–serine 840 are compositionally biased toward low complexity. Basic and acidic residues predominate over residues asparagine 1125–aspartate 1135.

This sequence belongs to the potassium channel family. Calcium-activated (TC 1.A.1.3) subfamily. KCa5.1/KCNU1 sub-subfamily. Homotetramer; which constitutes the activated potassium channel. Interacts with LRRC52; this interaction changes channel gating properties, such as shifting gating to more negative potentials at a given pH. As to expression, testis-specific.

The protein localises to the cell membrane. Its subcellular location is the cell projection. The protein resides in the cilium. It is found in the flagellum membrane. The enzyme catalyses K(+)(in) = K(+)(out). Regulated by changes in cytosolic pH; activated by alkalization. Activated by intracellular Ca(2+). Despite strong sequence similarity, human KCNU1 channels are significantly more sensitive to activation by internal Ca(2+) and less pH-sensitive than mouse KCNU1. VU0546110 acts as a selective inhibitor. The auxiliary subunit LRRC52 shifts the activation of KCNU1 to more negative potentials at a given pH. In terms of biological role, testis-specific potassium channel activated by both intracellular pH and membrane voltage that mediates export of K(+). Represents the primary spermatozoan K(+) current. The channel underlies a pH-triggered membrane hyperpolarization during the process of sperm capacitation, as sperm encounter the alkaline environment near the ovum in the female reproductive tract, thereby playing an essential for male fertility. The polypeptide is Potassium channel subfamily U member 1 (Homo sapiens (Human)).